The following is a 516-amino-acid chain: Effector protein hopAB1 (516 aa).

Disordered stretches follow at residues 1-93 and 175-259; these read MSGI…AQPA and RALA…DEAL. Positions 16-30 are enriched in basic and acidic residues; it reads WRADDEPVTERERDS. Residues 31–41 are compositionally biased toward polar residues; it reads SSGANLTNSPQ. The span at 81–90 shows a compositional bias: pro residues; the sequence is PVEPRQPPEA. Composition is skewed to low complexity over residues 183 to 196 and 212 to 224; these read PAPSRPVASSSRSS and QTSSSSQATSSTS.

The protein belongs to the HopAB family.

The protein localises to the secreted. Functionally, effector protein that plays different roles depending on the species and plant cultivars that interact with the pathogen. Acts as a virulence determinant by enhancing the development of disease symptoms and bacterial growth. Acts as an avirulence factor by eliciting hypersensitive response (HR) and plant resistance. In Pseudomonas syringae pv. syringae (strain B728a), this protein is Effector protein hopAB1 (hopAB1).